Consider the following 337-residue polypeptide: S-adenosylmethionine:tRNA ribosyltransferase-isomerase (337 aa).

This sequence belongs to the QueA family. Monomer.

It localises to the cytoplasm. The enzyme catalyses 7-aminomethyl-7-carbaguanosine(34) in tRNA + S-adenosyl-L-methionine = epoxyqueuosine(34) in tRNA + adenine + L-methionine + 2 H(+). The protein operates within tRNA modification; tRNA-queuosine biosynthesis. In terms of biological role, transfers and isomerizes the ribose moiety from AdoMet to the 7-aminomethyl group of 7-deazaguanine (preQ1-tRNA) to give epoxyqueuosine (oQ-tRNA). The polypeptide is S-adenosylmethionine:tRNA ribosyltransferase-isomerase (Legionella pneumophila (strain Paris)).